The following is a 75-amino-acid chain: ATP synthase subunit c (75 aa).

The next 2 membrane-spanning stretches (helical) occupy residues 9 to 29 and 52 to 72; these read IGAG…GNIW and IGFA…LILL.

Belongs to the ATPase C chain family. As to quaternary structure, F-type ATPases have 2 components, F(1) - the catalytic core - and F(0) - the membrane proton channel. F(1) has five subunits: alpha(3), beta(3), gamma(1), delta(1), epsilon(1). F(0) has four main subunits: a(1), b(1), b'(1) and c(10-14). The alpha and beta chains form an alternating ring which encloses part of the gamma chain. F(1) is attached to F(0) by a central stalk formed by the gamma and epsilon chains, while a peripheral stalk is formed by the delta, b and b' chains.

The protein localises to the cell inner membrane. F(1)F(0) ATP synthase produces ATP from ADP in the presence of a proton or sodium gradient. F-type ATPases consist of two structural domains, F(1) containing the extramembraneous catalytic core and F(0) containing the membrane proton channel, linked together by a central stalk and a peripheral stalk. During catalysis, ATP synthesis in the catalytic domain of F(1) is coupled via a rotary mechanism of the central stalk subunits to proton translocation. Its function is as follows. Key component of the F(0) channel; it plays a direct role in translocation across the membrane. A homomeric c-ring of between 10-14 subunits forms the central stalk rotor element with the F(1) delta and epsilon subunits. The polypeptide is ATP synthase subunit c (Rhodospirillum rubrum (strain ATCC 11170 / ATH 1.1.1 / DSM 467 / LMG 4362 / NCIMB 8255 / S1)).